The following is a 434-amino-acid chain: Nicotinate phosphoribosyltransferase (434 aa).

His-242 carries the post-translational modification Phosphohistidine; by autocatalysis.

This sequence belongs to the NAPRTase family. Transiently phosphorylated on a His residue during the reaction cycle. Phosphorylation strongly increases the affinity for substrates and increases the rate of nicotinate D-ribonucleotide production. Dephosphorylation regenerates the low-affinity form of the enzyme, leading to product release.

It catalyses the reaction nicotinate + 5-phospho-alpha-D-ribose 1-diphosphate + ATP + H2O = nicotinate beta-D-ribonucleotide + ADP + phosphate + diphosphate. Its pathway is cofactor biosynthesis; NAD(+) biosynthesis; nicotinate D-ribonucleotide from nicotinate: step 1/1. Its function is as follows. Catalyzes the synthesis of beta-nicotinate D-ribonucleotide from nicotinate and 5-phospho-D-ribose 1-phosphate at the expense of ATP. The protein is Nicotinate phosphoribosyltransferase of Bartonella quintana (strain Toulouse) (Rochalimaea quintana).